The chain runs to 110 residues: Large ribosomal subunit protein uL24 (110 aa).

Belongs to the universal ribosomal protein uL24 family. In terms of assembly, part of the 50S ribosomal subunit.

Its function is as follows. One of two assembly initiator proteins, it binds directly to the 5'-end of the 23S rRNA, where it nucleates assembly of the 50S subunit. One of the proteins that surrounds the polypeptide exit tunnel on the outside of the subunit. The sequence is that of Large ribosomal subunit protein uL24 from Thermus thermophilus (strain ATCC BAA-163 / DSM 7039 / HB27).